We begin with the raw amino-acid sequence, 214 residues long: Nascent polypeptide-associated complex subunit alpha (214 aa).

Disordered regions lie at residues 1–57 and 119–179; these read MSNP…NEKK and ASAA…EDKD. The span at 22–38 shows a compositional bias: acidic residues; the sequence is AEDEGSDSSDSEGEGEV. The NAC-A/B domain maps to 52–117; it reads SRNEKKARKS…AKIEDLNSQA (66 aa). Positions 119-128 are enriched in low complexity; sequence ASAAAQLAAQ. Over residues 129-159 the composition is skewed to basic and acidic residues; the sequence is ESHDHAGHDHSGHDHSHDHGKGKAVDTGDEK. Residues 160–171 are compositionally biased toward acidic residues; the sequence is KEEEEDDTEEVD. The UBA domain occupies 175–214; it reads LEDKDIELVMTQASVSRNKAVKALKENDNDIVNSIMALSI.

Belongs to the NAC-alpha family. Part of the nascent polypeptide-associated complex (NAC), consisting of EGD2 and EGD1. NAC associates with ribosomes via EGD1.

It is found in the cytoplasm. The protein localises to the nucleus. Functionally, component of the nascent polypeptide-associated complex (NAC), a dynamic component of the ribosomal exit tunnel, protecting the emerging polypeptides from interaction with other cytoplasmic proteins to ensure appropriate nascent protein targeting. The NAC complex also promotes mitochondrial protein import by enhancing productive ribosome interactions with the outer mitochondrial membrane and blocks the inappropriate interaction of ribosomes translating non-secretory nascent polypeptides with translocation sites in the membrane of the endoplasmic reticulum. EGD2 may also be involved in transcription regulation. The polypeptide is Nascent polypeptide-associated complex subunit alpha (egd2) (Sclerotinia sclerotiorum (strain ATCC 18683 / 1980 / Ss-1) (White mold)).